We begin with the raw amino-acid sequence, 101 residues long: uncharacterized protein (101 aa).

The helical transmembrane segment at 58–80 threads the bilayer; the sequence is VFPSLNIIILMSDALMFFLRSSI.

Its subcellular location is the membrane. This is an uncharacterized protein from Saccharomyces cerevisiae (strain ATCC 204508 / S288c) (Baker's yeast).